Consider the following 178-residue polypeptide: MSKKWYVVQAYSGFEKNVQRILEERIAREEMGDYFGQILVPVEKVVDIRNGRKTISERKSYPGYVLVEMEMTDDSWHLVKSTPRVSGFIGGRANRPTPISQREAEIILQQVQTGIEKPKPKVEFEVGQQVRVNEGPFADFNGVVEEVNYERNKLRVSVQIFGRETPVELEFSQVEKIN.

Residues 126 to 156 (VGQQVRVNEGPFADFNGVVEEVNYERNKLRV) form the KOW domain.

It belongs to the NusG family.

Participates in transcription elongation, termination and antitermination. The polypeptide is Transcription termination/antitermination protein NusG (Neisseria meningitidis serogroup B (strain ATCC BAA-335 / MC58)).